Consider the following 126-residue polypeptide: Holo-[acyl-carrier-protein] synthase (126 aa).

The Mg(2+) site is built by aspartate 9 and glutamate 58.

Belongs to the P-Pant transferase superfamily. AcpS family. Mg(2+) is required as a cofactor.

Its subcellular location is the cytoplasm. The catalysed reaction is apo-[ACP] + CoA = holo-[ACP] + adenosine 3',5'-bisphosphate + H(+). Transfers the 4'-phosphopantetheine moiety from coenzyme A to a Ser of acyl-carrier-protein. The protein is Holo-[acyl-carrier-protein] synthase of Cronobacter sakazakii (strain ATCC BAA-894) (Enterobacter sakazakii).